Reading from the N-terminus, the 80-residue chain is RNA-binding protein Hfq (80 aa).

The Sm domain occupies 10–70 (DLFLNTVRKQ…ISTIMPGQPL (61 aa)).

The protein belongs to the Hfq family. In terms of assembly, homohexamer.

In terms of biological role, RNA chaperone that binds small regulatory RNA (sRNAs) and mRNAs to facilitate mRNA translational regulation in response to envelope stress, environmental stress and changes in metabolite concentrations. Also binds with high specificity to tRNAs. This is RNA-binding protein Hfq from Rhizobium meliloti (strain 1021) (Ensifer meliloti).